We begin with the raw amino-acid sequence, 475 residues long: Mitochondrial adenyl nucleotide antiporter SLC25A24 (475 aa).

Residues 1–173 are regulatory N-terminal domain; that stretch reads MLRWLRGFVL…RFWKHSTGID (173 aa). Residues 1–197 lie on the Mitochondrial intermembrane side of the membrane; sequence MLRWLRGFVL…ERKSGQWWRQ (197 aa). 4 EF-hand domains span residues 19-54, 55-88, 86-121, and 122-157; these read EPPT…LGIP, LGQD…KDHE, DHEK…LGLT, and ISEQ…NPVA. Asp32, Asn34, Asp36, Val38, Glu43, Asp68, Asn70, Asp72, Lys74, Glu79, Asp99, Asn101, Asp103, Lys105, Glu110, Asp135, Asp137, Thr139, Thr141, and Glu146 together coordinate Ca(2+). The interval 159 to 168 is linker region; the sequence is IEEIIRFWKH. Positions 174–475 are C-terminal transmembrane transporter domain; sequence IGDSLTIPDE…MKQTLGVTQK (302 aa). Solcar repeat units follow at residues 192–276, 284–369, and 381–469; these read GQWW…YKKL, IGTF…LKSH, and PGVL…MKQT. The chain crosses the membrane as a helical span at residues 198 to 215; that stretch reads LLAGGIAGAVSRTSTAPL. The Mitochondrial matrix segment spans residues 216–250; the sequence is DRLKVMMQVHGSKSMNIFGGFRQMIKEGGVRSLWR. Residues 251–270 traverse the membrane as a helical segment; the sequence is GNGTNVIKIAPETAVKFWVY. The Mitochondrial intermembrane portion of the chain corresponds to 271–293; the sequence is EQYKKLLTEEGQKIGTFERFISG. The helical transmembrane segment at 294–307 threads the bilayer; that stretch reads SMAGATAQTFIYPM. Topologically, residues 308–343 are mitochondrial matrix; it reads EVMKTRLAVGKTGQYSGIYDCAKKILKYEGFGAFYK. Residue Lys318 is modified to N6-acetyllysine; alternate. Residue Lys318 is modified to N6-succinyllysine; alternate. Position 334 is an N6-acetyllysine (Lys334). A helical membrane pass occupies residues 344 to 363; the sequence is GYVPNLLGIIPYAGIDLAVY. Topologically, residues 364 to 386 are mitochondrial intermembrane; sequence ELLKSHWLDNFAKDSVNPGVLVL. Residues 387–404 form a helical membrane-spanning segment; sequence LGCGALSSTCGQLASYPL. Residues 405 to 443 are Mitochondrial matrix-facing; it reads ALVRTRMQAQAMLEGAPQLNMVGLFRRIISKEGLPGLYR. N6-acetyllysine; alternate is present on Lys435. At Lys435 the chain carries N6-succinyllysine; alternate. The chain crosses the membrane as a helical span at residues 444 to 463; that stretch reads GITPNFMKVLPAVGISYVVY. Over 464–475 the chain is Mitochondrial intermembrane; sequence ENMKQTLGVTQK.

It belongs to the mitochondrial carrier (TC 2.A.29) family. Monomer. As to expression, mainly expressed in colon. Also expressed in the small intestine proximal to the ileum. Weakly expressed in kidney but not in the liver.

Its subcellular location is the mitochondrion inner membrane. The protein resides in the peroxisome membrane. The catalysed reaction is Mg(2+)(out) + phosphate(in) + ATP(out) = Mg(2+)(in) + phosphate(out) + ATP(in). It carries out the reaction ADP(out) + phosphate(in) + H(+)(out) = ADP(in) + phosphate(out) + H(+)(in). The enzyme catalyses AMP(out) + phosphate(in) = AMP(in) + phosphate(out). It catalyses the reaction phosphate(in) + ATP(out) + 2 H(+)(out) = phosphate(out) + ATP(in) + 2 H(+)(in). The catalysed reaction is dADP(in) + ADP(out) = dADP(out) + ADP(in). It carries out the reaction Mg(2+)(in) + ADP(out) + ATP(in) + H(+)(out) = Mg(2+)(out) + ADP(in) + ATP(out) + H(+)(in). The enzyme catalyses ADP(out) + diphosphate(in) = ADP(in) + diphosphate(out). It catalyses the reaction dAMP(in) + ADP(out) + H(+)(out) = dAMP(out) + ADP(in) + H(+)(in). The catalysed reaction is 3'-AMP(in) + ADP(out) + H(+)(out) = 3'-AMP(out) + ADP(in) + H(+)(in). It carries out the reaction dAMP(out) + phosphate(in) = dAMP(in) + phosphate(out). The enzyme catalyses 3'-AMP(out) + phosphate(in) = 3'-AMP(in) + phosphate(out). It catalyses the reaction dADP(out) + phosphate(in) + H(+)(out) = dADP(in) + phosphate(out) + H(+)(in). Its activity is regulated as follows. Activated by an increase in cytosolic calcium levels that induce a conformational change of the N-terminal regulatory domain, uncapping the channel and allowing transport. Inhibited by bathophenanthroline, mersalyl, p-hydroxymercuribenzoate, bromcresol purple and tannic acid. Functionally, electroneutral antiporter that mediates the transport of adenyl nucleotides through the inner mitochondrial membrane. Originally identified as an ATP-magnesium/inorganic phosphate antiporter, it also acts as a broad specificity adenyl nucleotide antiporter. By regulating the mitochondrial matrix adenyl nucleotide pool could adapt to changing cellular energetic demands and indirectly regulate adenyl nucleotide-dependent metabolic pathways. In vitro, a low activity is also observed with guanyl and pyrimidine nucleotides. May play a role in protecting cells against oxidative stress-induced cell death, by buffering calcium levels in the mitochondrial matrix through the formation of calcium-phosphate precipitates. The chain is Mitochondrial adenyl nucleotide antiporter SLC25A24 (SLC25A24) from Oryctolagus cuniculus (Rabbit).